We begin with the raw amino-acid sequence, 1085 residues long: Solute carrier family 12 member 4 (1085 aa).

The Cytoplasmic segment spans residues 1–119 (MPHFTVVPVD…RRAAKAPSMG (119 aa)). Phosphoserine occurs at positions 24, 47, 51, 81, and 88. Residues 32–56 (AEREDSDGQGNHRENSPFLSPLDAS) form a disordered region. Residues 120 to 141 (TLMGVYLPCLQNIFGVILFLRL) traverse the membrane as a discontinuously helical segment. N131 and I132 together coordinate K(+). Residues 142 to 149 (TWMVGTAG) are Extracellular-facing. A helical transmembrane segment spans residues 150–172 (VLQALLIVLICCCCTLLTAISMS). Topologically, residues 173–196 (AIATNGVVPAGGSYFMISRSLGPE) are cytoplasmic. The chain crosses the membrane as a helical span at residues 197–225 (FGGAVGLCFYLGTTFAAAMYILGAIEILL). Position 216 (Y216) interacts with K(+). At 226–248 (TYIAPPAAIFYPSGTHDMSSATL) the chain is on the extracellular side. 2 helical membrane-spanning segments follow: residues 249–271 (NNMRVYGTIFLTFMTLVVFVGVK) and 272–297 (YVNKFASLFLACVIISILSIYVGGIK). Residues 298 to 419 (SAFDPPVFPV…LYVVADIATS (122 aa)) are Extracellular-facing. Cysteines 308 and 323 form a disulfide. Residues N312, N331, and N347 are each glycosylated (N-linked (GlcNAc...) asparagine). C343 and C353 are oxidised to a cystine. Residues 420–440 (FTVLVGIFFPSVTGIMAGSNR) traverse the membrane as a helical segment. Residues P429 and T432 each coordinate K(+). Chloride contacts are provided by G433, I434, and M435. At 441-450 (SGDLRDAQKS) the chain is on the cytoplasmic side. A helical transmembrane segment spans residues 451–473 (IPVGTILAIVTTSLVYFSSVILF). The Extracellular segment spans residues 474–504 (GACIEGVVLRDKYGDGVSRNLVVGTLAWPSP). Residues 505–531 (WVIVVGSFFSTCGAGLQSLTGAPRLLQ) form a helical membrane-spanning segment. The Cytoplasmic segment spans residues 532-554 (AIAKDNIIPFLRVFGHGKANGEP). A run of 2 helical transmembrane segments spans residues 555–575 (TWALLLTALIAELGILIASLD) and 576–598 (MVAPILSMFFLMCYLFVNLACAV). Chloride is bound at residue Y589. Topologically, residues 599 to 612 (QTLLRTPNWRPRFK) are cytoplasmic. 2 helical membrane-spanning segments follow: residues 613–635 (YYHWALSFLGMSLCLALMFVSSW) and 636–651 (YYALVAMVIAGMIYKY). The Cytoplasmic portion of the chain corresponds to 652–1085 (IEYQGAEKEW…GGREVITIYS (434 aa)). The scissor helix stretch occupies residues 665 to 681 (IRGLSLSAARYALLRLE). Positions 697, 699, 707, 708, and 730 each coordinate ATP. Position 734 is a phosphoserine (S734). ATP contacts are provided by G794, W795, and Y797. 2 positions are modified to phosphoserine: S916 and S967. T983 bears the Phosphothreonine mark. S1050 is subject to Phosphoserine.

It belongs to the SLC12A transporter family. K/Cl co-transporter subfamily. In terms of assembly, homodimer; adopts a domain-swap conformation at the scissor helices connecting the transmembrane domain and C-terminal domain. Heterodimer with other K-Cl cotransporters. N-glycosylated. In terms of processing, phosphorylated, phosphorylation may regulate transporter activity. Ubiquitous.

The protein resides in the cell membrane. It carries out the reaction K(+)(in) + chloride(in) = K(+)(out) + chloride(out). Inhibited by WNK3. Its function is as follows. Mediates electroneutral potassium-chloride cotransport when activated by cell swelling. May contribute to cell volume homeostasis in single cells. May be involved in the regulation of basolateral Cl(-) exit in NaCl absorbing epithelia. The polypeptide is Solute carrier family 12 member 4 (Slc12a4) (Rattus norvegicus (Rat)).